The chain runs to 436 residues: Glutamyl-tRNA reductase 2 (436 aa).

Residues 49-52, S106, 111-113, and Q117 each bind substrate; these read TCNR and EPQ. C50 (nucleophile) is an active-site residue. An NADP(+)-binding site is contributed by 186 to 191; sequence GAGKMC.

The protein belongs to the glutamyl-tRNA reductase family. In terms of assembly, homodimer.

The catalysed reaction is (S)-4-amino-5-oxopentanoate + tRNA(Glu) + NADP(+) = L-glutamyl-tRNA(Glu) + NADPH + H(+). Its pathway is porphyrin-containing compound metabolism; protoporphyrin-IX biosynthesis; 5-aminolevulinate from L-glutamyl-tRNA(Glu): step 1/2. Functionally, catalyzes the NADPH-dependent reduction of glutamyl-tRNA(Glu) to glutamate 1-semialdehyde (GSA). In Koribacter versatilis (strain Ellin345), this protein is Glutamyl-tRNA reductase 2.